We begin with the raw amino-acid sequence, 418 residues long: MMFSKSGLVAVAMLGASAVEAHMKMRQPTPYSDSSLNNSPLAADGSDFPCKLRDNAFVPPSQETIAQIGEVMPLTFTGSATHGGGSCQVSLTTDLKPSKDSKWMVIKSIEGGCPANVDGNMSGGADVPDPFEFNYTIPAGIEPGKYTLAWTWFNRIGNREMYMNCAPITVTAGSSKRDAAPVAEKVEVEKRSANFPAMFVANINGCTTKEGVDIRFPDPGDVVEYDGNPSNLQPAGEAACSGTPAWTVSGGSGSPSTPSTSSSTPAGTSAGVSVSVGATVGATPTAEPESSSSEPAESEGAPGVFAPTSATVFPSTPTASAAPTSSSSGAGSESDSSSSSNGALTGPCSTEGLWNCIDGSSFQRCANGQWTTAQQMAAGTECTVGQNAQFTISATAVKPRMINAMRHRKRAHGGHRHA.

Positions methionine 1 to alanine 21 are cleaved as a signal peptide. Cu(+)-binding residues include histidine 22 and histidine 82. Cystine bridges form between cysteine 50-cysteine 165, cysteine 87-cysteine 113, and cysteine 206-cysteine 240. N-linked (GlcNAc...) asparagine glycosylation is found at asparagine 120 and asparagine 134. Residues aspartate 226–threonine 345 are disordered. Low complexity predominate over residues serine 254–threonine 345.

Belongs to the polysaccharide monooxygenase AA11 family. Cu(2+) is required as a cofactor.

The protein resides in the secreted. In terms of biological role, lytic polysaccharide monooxygenase (LPMO)-like protein that acts as a strict peroxygenase and does not catalyze a monooxygenase reaction. It is indeed hardly active on chitin, while being very active on soluble oligomers of N-acetylglucosamine. Cleaves the glycosidic bonds byoxidizing the C1 position. Also unable to oxidize cellopentaose. Probably breaks glycosidic bonds in non-polymeric substrates possibly carbohydrates in the cell wall of the fungus or its competitors. In the presence of chitotetraose, the enzyme can withstand considerable amounts of H(2)O(2), which it uses to efficiently and stoichiometrically convert this substrate. This chain is AA11 family lytic polysaccharide monooxygenase B, found in Aspergillus fumigatus (strain ATCC MYA-4609 / CBS 101355 / FGSC A1100 / Af293) (Neosartorya fumigata).